The following is an 82-amino-acid chain: Cytochrome b559 subunit alpha (82 aa).

The helical transmembrane segment at Val-22 to Tyr-36 threads the bilayer. Residue His-24 participates in heme binding.

Belongs to the PsbE/PsbF family. In terms of assembly, heterodimer of an alpha subunit and a beta subunit. PSII is composed of 1 copy each of membrane proteins PsbA, PsbB, PsbC, PsbD, PsbE, PsbF, PsbH, PsbI, PsbJ, PsbK, PsbL, PsbM, PsbT, PsbX, PsbY, Psb30/Ycf12, peripheral proteins PsbO, CyanoQ (PsbQ), PsbU, PsbV and a large number of cofactors. It forms dimeric complexes. Requires heme b as cofactor.

The protein resides in the cellular thylakoid membrane. Functionally, this b-type cytochrome is tightly associated with the reaction center of photosystem II (PSII). PSII is a light-driven water:plastoquinone oxidoreductase that uses light energy to abstract electrons from H(2)O, generating O(2) and a proton gradient subsequently used for ATP formation. It consists of a core antenna complex that captures photons, and an electron transfer chain that converts photonic excitation into a charge separation. In Prochlorococcus marinus (strain MIT 9303), this protein is Cytochrome b559 subunit alpha.